The chain runs to 304 residues: Histone H1.8 (304 aa).

Low complexity predominate over residues 1 to 24 (MAPGSVSSVSSSSFPSRDTSPSGS). Disordered regions lie at residues 1-38 (MAPGSVSSVSSSSFPSRDTSPSGSCGLPGADKPGPSCR), 110-248 (SKAK…NSVA), and 270-304 (TVQETKVPTPSQDIGHKVQPIPRVRKAKTPENTQA). The region spanning 45-123 (RNPTMLHMVL…GATGSFKLVP (79 aa)) is the H15 domain. Over residues 132–144 (APKAGRGAAGAKE) the composition is skewed to low complexity. Composition is skewed to basic and acidic residues over residues 153–166 (LKKDQVGKATMEKG), 189–202 (KPKEVRKAPLKQDK), and 225–237 (ANAHGKTKGEKSK). Residues 154–170 (KKDQVGKATMEKGQKRR) carry the Nuclear localization signal motif. Residues 270 to 281 (TVQETKVPTPSQ) show a composition bias toward polar residues.

The protein belongs to the histone H1/H5 family. In terms of tissue distribution, oocyte-specific.

It localises to the cytoplasm. It is found in the nucleus. The protein localises to the chromosome. Its function is as follows. May play a key role in the control of gene expression during oogenesis and early embryogenesis, presumably through the perturbation of chromatin structure. Essential for meiotic maturation of germinal vesicle-stage oocytes. The somatic type linker histone H1c is rapidly replaced by H1oo in a donor nucleus transplanted into an oocyte. The greater mobility of H1oo as compared to H1c may contribute to this rapid replacement and increased instability of the embryonic chromatin structure. The rapid replacement of H1c with H1oo may play an important role in nuclear remodeling. In Mus musculus (Mouse), this protein is Histone H1.8.